The following is a 327-amino-acid chain: Ankyrin repeat domain-containing protein SOWAHD (327 aa).

The segment at 1 to 31 is disordered; that stretch reads MAQALEDGNPLPKASNRPAESEAPSDPQIKD. 3 ANK repeats span residues 112-141, 147-162, and 186-216; these read CLEPREHAWILAAAECRFEVLLEMLEAEPS, DPITGYSVLHWLAKHG, and PGSGGLTPLHLAALQGHDMVIKVLVGALGAD. The disordered stretch occupies residues 251 to 311; that stretch reads ERDRKRENAN…EKKASSTQEG (61 aa). Positions 260 to 275 are enriched in low complexity; the sequence is NNNSSRTTTTTTTTSR. Basic and acidic residues predominate over residues 292-305; it reads HYKEASQPVKEKKA.

This sequence belongs to the SOWAH family.

The sequence is that of Ankyrin repeat domain-containing protein SOWAHD (Sowahd) from Mus musculus (Mouse).